The following is a 228-amino-acid chain: N-acylneuraminate cytidylyltransferase (228 aa).

Belongs to the CMP-NeuNAc synthase family.

Its subcellular location is the cytoplasm. The enzyme catalyses an N-acylneuraminate + CTP = a CMP-N-acyl-beta-neuraminate + diphosphate. The protein is N-acylneuraminate cytidylyltransferase (neuA) of Neisseria meningitidis serogroup B (strain ATCC BAA-335 / MC58).